The following is a 469-amino-acid chain: Protein RUFY3 (469 aa).

A phosphothreonine mark is found at Thr-5 and Thr-12. Phosphoserine is present on residues Ser-34 and Ser-49. Phosphothreonine is present on Thr-51. The RUN domain occupies 95-227 (DSDYAPLQQF…IDANFCMKGE (133 aa)). Coiled-coil stretches lie at residues 271 to 362 (NRHL…VEKE) and 422 to 463 (KSEL…AANK).

In terms of assembly, interacts with PAK1. Interacts (via C-terminus) with Ras-related Rab-5 proteins. Interacts (via C-terminus) with Ras-related Rap-2 proteins. Interacts with PIK3CA and PIK3R1. Interacts (via N-terminus) with FSCN1; this interaction induces neuron axon development. Interacts with DBN1. Interacts (via the second coiled coil) with GTP-, but not GDP-bound ARL8A and ARL8B. Interacts with dynactin/DCTN1 and the dynein intermediate chain DYNC1I1/2. Directly interacts with DYNC1LI1. Post-translationally, phosphorylated by PAK1.

The protein localises to the cytoplasm. Its subcellular location is the endomembrane system. It is found in the cell projection. It localises to the invadopodium. The protein resides in the growth cone. The protein localises to the perikaryon. Its subcellular location is the filopodium. It is found in the lamellipodium. It localises to the lysosome. Its function is as follows. ARL8 effector that promotes the coupling of endolysosomes to dynein-dynactin for retrograde transport along microtubules. Acts by binding both GTP-bound ARL8 and dynein-dynactin. In nonneuronal cells, promotes concentration of endolysosomes in the juxtanuclear area. In hippocampal neurons, drives retrograde transport of endolysosomes from the axon to the soma. Plays a role in the generation of neuronal polarity formation and axon growth. Implicated in the formation of a single axon by developing neurons. May inhibit the formation of additional axons by inhibition of PI3K in minor neuronal processes. Plays a role in the formation of F-actin-enriched protrusive structures at the cell periphery. Plays a role in cytoskeletal organization by regulating the subcellular localization of FSCN1 and DBN1 at axonal growth cones. The polypeptide is Protein RUFY3 (Pongo abelii (Sumatran orangutan)).